Reading from the N-terminus, the 349-residue chain is 4-hydroxy-3-methylbut-2-en-1-yl diphosphate synthase (flavodoxin) (349 aa).

Residues Cys265, Cys268, Cys300, and Glu307 each coordinate [4Fe-4S] cluster.

It belongs to the IspG family. It depends on [4Fe-4S] cluster as a cofactor.

The enzyme catalyses (2E)-4-hydroxy-3-methylbut-2-enyl diphosphate + oxidized [flavodoxin] + H2O + 2 H(+) = 2-C-methyl-D-erythritol 2,4-cyclic diphosphate + reduced [flavodoxin]. Its pathway is isoprenoid biosynthesis; isopentenyl diphosphate biosynthesis via DXP pathway; isopentenyl diphosphate from 1-deoxy-D-xylulose 5-phosphate: step 5/6. Converts 2C-methyl-D-erythritol 2,4-cyclodiphosphate (ME-2,4cPP) into 1-hydroxy-2-methyl-2-(E)-butenyl 4-diphosphate. The sequence is that of 4-hydroxy-3-methylbut-2-en-1-yl diphosphate synthase (flavodoxin) from Thermodesulfovibrio yellowstonii (strain ATCC 51303 / DSM 11347 / YP87).